The sequence spans 268 residues: Undecaprenyl-diphosphatase (268 aa).

The next 8 helical transmembrane spans lie at 11–33 (FLGLIEGLTEFIPVSSTGHLLLI), 46–66 (FEVLIQLGAILAILSVYSAKL), 84–104 (LGVLVAFLPAAVIGALAHGFI), 107–127 (VLFETPMLVCIMLIVGGFILL), 144–164 (YPLPICLAIGFIQCLAMIPGV), 185–205 (AEFSFFLAMPTMAGAFAYDLF), 213–233 (FNDGALIVVGFIMAFISGVFV), and 246–266 (FALFGWWRLIVGSAGMAALII).

This sequence belongs to the UppP family.

The protein localises to the cell inner membrane. It catalyses the reaction di-trans,octa-cis-undecaprenyl diphosphate + H2O = di-trans,octa-cis-undecaprenyl phosphate + phosphate + H(+). Its function is as follows. Catalyzes the dephosphorylation of undecaprenyl diphosphate (UPP). Confers resistance to bacitracin. In Brucella suis (strain ATCC 23445 / NCTC 10510), this protein is Undecaprenyl-diphosphatase.